The primary structure comprises 112 residues: Larval cuticle protein 3 (112 aa).

The first 16 residues, 1–16, serve as a signal peptide directing secretion; sequence MFKILLVCSLAALVAA. Residues 31-92 enclose the Chitin-binding type R&amp;R domain; sequence PDGFVSKLVL…PQSDLLPTPP (62 aa).

Its function is as follows. Component of the larval cuticle. The chain is Larval cuticle protein 3 (Lcp3) from Drosophila melanogaster (Fruit fly).